Here is a 468-residue protein sequence, read N- to C-terminus: 3-isopropylmalate dehydratase large subunit (468 aa).

Residues C347, C407, and C410 each coordinate [4Fe-4S] cluster.

Belongs to the aconitase/IPM isomerase family. LeuC type 1 subfamily. As to quaternary structure, heterodimer of LeuC and LeuD. Requires [4Fe-4S] cluster as cofactor.

The enzyme catalyses (2R,3S)-3-isopropylmalate = (2S)-2-isopropylmalate. It functions in the pathway amino-acid biosynthesis; L-leucine biosynthesis; L-leucine from 3-methyl-2-oxobutanoate: step 2/4. In terms of biological role, catalyzes the isomerization between 2-isopropylmalate and 3-isopropylmalate, via the formation of 2-isopropylmaleate. The protein is 3-isopropylmalate dehydratase large subunit of Rippkaea orientalis (strain PCC 8801 / RF-1) (Cyanothece sp. (strain PCC 8801)).